A 490-amino-acid polypeptide reads, in one-letter code: ATP synthase subunit beta, chloroplastic (490 aa).

Thr-6 carries the post-translational modification Phosphothreonine. Residue Ser-13 is modified to Phosphoserine. 172–179 contributes to the ATP binding site; sequence GGAGVGKT.

This sequence belongs to the ATPase alpha/beta chains family. As to quaternary structure, F-type ATPases have 2 components, CF(1) - the catalytic core - and CF(0) - the membrane proton channel. CF(1) has five subunits: alpha(3), beta(3), gamma(1), delta(1), epsilon(1). CF(0) has four main subunits: a(1), b(1), b'(1) and c(9-12).

The protein resides in the plastid. The protein localises to the chloroplast thylakoid membrane. The catalysed reaction is ATP + H2O + 4 H(+)(in) = ADP + phosphate + 5 H(+)(out). In terms of biological role, produces ATP from ADP in the presence of a proton gradient across the membrane. The catalytic sites are hosted primarily by the beta subunits. This is ATP synthase subunit beta, chloroplastic from Aethionema cordifolium (Lebanon stonecress).